A 452-amino-acid polypeptide reads, in one-letter code: Bifunctional protein GlmU (452 aa).

Residues 1–232 (MTTRTSLTIV…EDEVRGINTK (232 aa)) are pyrophosphorylase. UDP-N-acetyl-alpha-D-glucosamine-binding positions include 11 to 14 (LAAG), Lys-25, Gln-78, and 83 to 84 (GT). Position 108 (Asp-108) interacts with Mg(2+). Residues Gly-144, Glu-158, Asn-173, and Asn-230 each coordinate UDP-N-acetyl-alpha-D-glucosamine. Asn-230 is a Mg(2+) binding site. Residues 233–253 (AQLAEAEAVMQTRLRQAAMTA) are linker. Positions 254 to 452 (GVTLISPETI…SARARKPKTS (199 aa)) are N-acetyltransferase. The UDP-N-acetyl-alpha-D-glucosamine site is built by Arg-319 and Lys-337. The Proton acceptor role is filled by His-349. Residues Tyr-352 and Asn-363 each contribute to the UDP-N-acetyl-alpha-D-glucosamine site. Acetyl-CoA is bound by residues Ala-366, 372–373 (NY), Ser-391, Ser-409, and Arg-426.

In the N-terminal section; belongs to the N-acetylglucosamine-1-phosphate uridyltransferase family. The protein in the C-terminal section; belongs to the transferase hexapeptide repeat family. Homotrimer. Mg(2+) serves as cofactor.

It is found in the cytoplasm. It catalyses the reaction alpha-D-glucosamine 1-phosphate + acetyl-CoA = N-acetyl-alpha-D-glucosamine 1-phosphate + CoA + H(+). It carries out the reaction N-acetyl-alpha-D-glucosamine 1-phosphate + UTP + H(+) = UDP-N-acetyl-alpha-D-glucosamine + diphosphate. Its pathway is nucleotide-sugar biosynthesis; UDP-N-acetyl-alpha-D-glucosamine biosynthesis; N-acetyl-alpha-D-glucosamine 1-phosphate from alpha-D-glucosamine 6-phosphate (route II): step 2/2. The protein operates within nucleotide-sugar biosynthesis; UDP-N-acetyl-alpha-D-glucosamine biosynthesis; UDP-N-acetyl-alpha-D-glucosamine from N-acetyl-alpha-D-glucosamine 1-phosphate: step 1/1. It functions in the pathway bacterial outer membrane biogenesis; LPS lipid A biosynthesis. Catalyzes the last two sequential reactions in the de novo biosynthetic pathway for UDP-N-acetylglucosamine (UDP-GlcNAc). The C-terminal domain catalyzes the transfer of acetyl group from acetyl coenzyme A to glucosamine-1-phosphate (GlcN-1-P) to produce N-acetylglucosamine-1-phosphate (GlcNAc-1-P), which is converted into UDP-GlcNAc by the transfer of uridine 5-monophosphate (from uridine 5-triphosphate), a reaction catalyzed by the N-terminal domain. The polypeptide is Bifunctional protein GlmU (Rhodopseudomonas palustris (strain BisB5)).